A 1486-amino-acid polypeptide reads, in one-letter code: MIVRSLLLAGSLLLASVVPASFTLAKSDGPQIKVKEFDKVPTDVHYFEDTDTIILSGKKAELYISTDAAASWNLLEGKTGILYPNKYHTQSAVIYGPNRKHWVTFDAAKTWREFEVPDKLAFGGGFMPFTFHGKDAEKVLLSAEECQFMTCRHVTYYTTDGFKTVKRLFEGDMGCFWAVGNPAFGEGEPHLPDKLDDRVFCIWPHATPLDLTRRLVYSDTYFSDRKAVAVEAGGRDIKGVNNMASVKKFLLLAASSVGTSEAAIYVSKDAVHWDRADFYGGPKVRGGKFTVLESTNYSIQVNVASRRSRVPIGSLFTSDSTGTSFTMNLDGVNEDKDMITDFEQVSGIQGIFLVNIVENAEEVKKGATREKKLVSRISFDDGRTFKPLKCGDKELHLHSITRPSNIGRTYSSPAPGLVMGIGNTGDKLGTYETGDTFVSNDAGVTWRKALDKAHKYEFGDQGSLLVAVFDEYKDKIFTDEISYSLNHGKDWKKAKLPHRVTALQLTTTPDSTSLQFLLVAEDEKKKFYVMSIDFSDVHERKCEKKDFERWPARLDEKGEPDCLMGHKQFYKRRKADADCFVKEKFKEPLPETEPCQCTKEDFECAAGFLRNKDYECEPHRKVSPPEGKCKNPDDKFMGPSGYRLIPGDDCLKKGGVDLEKEVERTCKDATKAPVSGQISVETTPFKTKNLNYRYLERSDTSSGDDETVILKTDDGDLFVTRDHGKTWQRGKFKEPISLYIPHKYDNDVIYLLTEGKKAYWSIDRAHTFHSFEGKLPITRTLGTLPLYFHPDHPDWLIWIGGQDCKGKKCTDLAYYSKNRGDEWDLLLRGVGKCMFVGKEGELTADDLIFCSQHEHEDPSKSLRLISSDDMFTKKTSIHFDGKPIVGYAKMSEFIVVATKNGTELSSFTSVDGKTFAHAAFPPNYHIDAEYAYTVLDSSTHSIFLHVTDHPAKMHEFGSILKSNSNGTSYVLSLPNANRNDRDYVDFEKIQVVEGVALANIVINPDEVKGKGQEKKFRTLITHNDGSEWALLPPPKKDVDGKSFDCKVKDKGTDDCALHLHGFTERRENRDSMSSGSAVGLIIGVGNVGSSLTPRAESDTYMSRDAGITWHQIKKGRYQWEFGDQGSIVVVVAEEKPTKVLSYSLDEGETWTDFEFSDKEVTVEDISTVPSDTSRNFILWCRPGSSNEIVAYNVDFSGLKEREKQCVLKKESPEADDYYLWSPKHPMQKNNCLFGHVSMYHRKRPEAKCYNGPKLDRLSSEKKNCECTRQDYECDYNYGRQSDGSCALVKGLKPADPMQICKDDPEAIEYFEPTGYRKLPVSTCEGGHQLDHLVARPCPNKKKEFDEKHPGIGGFGLFFAIFFPVAIATGVGYWAFSKWDGKFGRIRLGESQPESIFSRDSPLISVPVTIVAGTVAVITALPLLFSSLWRSFRGYTRLPGSWWGQRQRPYASRGAFAARRGEYVGVVDDEDELLGAEEFEGDEEEDV.

Positions 1–25 are cleaved as a signal peptide; it reads MIVRSLLLAGSLLLASVVPASFTLA. The Lumenal segment spans residues 26–1349; it reads KSDGPQIKVK…KKKEFDEKHP (1324 aa). N-linked (GlcNAc...) asparagine glycosylation occurs at asparagine 296. BNR repeat units lie at residues 377–386, 437–447, 483–493, and 718–728; these read ISFDDGRTFK, FVSNDAGVTWR, YSLNHGKDWKK, and FVTRDHGKTWQ. Residues asparagine 900 and asparagine 965 are each glycosylated (N-linked (GlcNAc...) asparagine). Residues 1100 to 1110 form a BNR 5 repeat; it reads YMSRDAGITWH. Residues 1350–1370 form a helical membrane-spanning segment; that stretch reads GIGGFGLFFAIFFPVAIATGV. The Cytoplasmic portion of the chain corresponds to 1371-1401; that stretch reads GYWAFSKWDGKFGRIRLGESQPESIFSRDSP. The chain crosses the membrane as a helical span at residues 1402-1422; sequence LISVPVTIVAGTVAVITALPL. Leucine 1423 is a topological domain (lumenal).

The protein belongs to the VPS10-related sortilin family.

The protein localises to the golgi apparatus. Its subcellular location is the trans-Golgi network membrane. It localises to the prevacuolar compartment membrane. Its function is as follows. Functions as a sorting receptor in the Golgi compartment required for the intracellular sorting and delivery of soluble vacuolar proteins, like carboxypeptidase Y (CPY) and proteinase A. Executes multiple rounds of sorting by cycling between the late Golgi and a prevacuolar endosome-like compartment. The sequence is that of Vacuolar protein sorting/targeting protein 10 (VPS10) from Trichophyton verrucosum (strain HKI 0517).